A 961-amino-acid polypeptide reads, in one-letter code: Probable inorganic carbon transporter subunit DabA (961 aa).

Cys-406, Asp-408, His-653, and Cys-668 together coordinate Zn(2+).

It belongs to the inorganic carbon transporter (TC 9.A.2) DabA family. In terms of assembly, forms a complex with DabB. Zn(2+) is required as a cofactor.

Its subcellular location is the cell inner membrane. In terms of biological role, part of an energy-coupled inorganic carbon pump. This chain is Probable inorganic carbon transporter subunit DabA, found in Hydrogenobaculum sp. (strain Y04AAS1).